Reading from the N-terminus, the 83-residue chain is Exodeoxyribonuclease 7 small subunit (83 aa).

Residues 1 to 25 (MQDELFETEKAPPKNAKNAPKKSFE) are disordered.

It belongs to the XseB family. As to quaternary structure, heterooligomer composed of large and small subunits.

Its subcellular location is the cytoplasm. The enzyme catalyses Exonucleolytic cleavage in either 5'- to 3'- or 3'- to 5'-direction to yield nucleoside 5'-phosphates.. Bidirectionally degrades single-stranded DNA into large acid-insoluble oligonucleotides, which are then degraded further into small acid-soluble oligonucleotides. This Helicobacter pylori (strain P12) protein is Exodeoxyribonuclease 7 small subunit.